We begin with the raw amino-acid sequence, 147 residues long: UPF0251 protein CTC_01373 (147 aa).

The protein belongs to the UPF0251 family.

The polypeptide is UPF0251 protein CTC_01373 (Clostridium tetani (strain Massachusetts / E88)).